We begin with the raw amino-acid sequence, 242 residues long: Biosynthetic peptidoglycan transglycosylase (242 aa).

A helical transmembrane segment spans residues I19–V39.

Belongs to the glycosyltransferase 51 family.

The protein localises to the cell inner membrane. The enzyme catalyses [GlcNAc-(1-&gt;4)-Mur2Ac(oyl-L-Ala-gamma-D-Glu-L-Lys-D-Ala-D-Ala)](n)-di-trans,octa-cis-undecaprenyl diphosphate + beta-D-GlcNAc-(1-&gt;4)-Mur2Ac(oyl-L-Ala-gamma-D-Glu-L-Lys-D-Ala-D-Ala)-di-trans,octa-cis-undecaprenyl diphosphate = [GlcNAc-(1-&gt;4)-Mur2Ac(oyl-L-Ala-gamma-D-Glu-L-Lys-D-Ala-D-Ala)](n+1)-di-trans,octa-cis-undecaprenyl diphosphate + di-trans,octa-cis-undecaprenyl diphosphate + H(+). It functions in the pathway cell wall biogenesis; peptidoglycan biosynthesis. Functionally, peptidoglycan polymerase that catalyzes glycan chain elongation from lipid-linked precursors. In Citrobacter koseri (strain ATCC BAA-895 / CDC 4225-83 / SGSC4696), this protein is Biosynthetic peptidoglycan transglycosylase.